The sequence spans 429 residues: Adenosylmethionine-8-amino-7-oxononanoate aminotransferase (429 aa).

Tryptophan 52 is a binding site for substrate. 112–113 (GS) provides a ligand contact to pyridoxal 5'-phosphate. Position 144 (tyrosine 144) interacts with substrate. Aspartate 245 is a pyridoxal 5'-phosphate binding site. Substrate is bound by residues lysine 274 and glycine 307. N6-(pyridoxal phosphate)lysine is present on lysine 274. 308–309 (PT) contacts pyridoxal 5'-phosphate. Arginine 391 contacts substrate.

Belongs to the class-III pyridoxal-phosphate-dependent aminotransferase family. BioA subfamily. As to quaternary structure, homodimer. It depends on pyridoxal 5'-phosphate as a cofactor.

It localises to the cytoplasm. The catalysed reaction is (8S)-8-amino-7-oxononanoate + S-adenosyl-L-methionine = S-adenosyl-4-methylsulfanyl-2-oxobutanoate + (7R,8S)-7,8-diammoniononanoate. The protein operates within cofactor biosynthesis; biotin biosynthesis; 7,8-diaminononanoate from 8-amino-7-oxononanoate (SAM route): step 1/1. Functionally, catalyzes the transfer of the alpha-amino group from S-adenosyl-L-methionine (SAM) to 7-keto-8-aminopelargonic acid (KAPA) to form 7,8-diaminopelargonic acid (DAPA). It is the only aminotransferase known to utilize SAM as an amino donor. The chain is Adenosylmethionine-8-amino-7-oxononanoate aminotransferase from Buchnera aphidicola subsp. Baizongia pistaciae (strain Bp).